The chain runs to 262 residues: Expansin-A13 (262 aa).

An N-terminal signal peptide occupies residues 1–22 (MAGVARMLAAVVCAIMPAAAMA). Positions 52 to 167 (GGACGYGNLY…QRVPCMKKGG (116 aa)) constitute an Expansin-like EG45 domain. The Expansin-like CBD domain maps to 177–257 (YFQLVLLTNV…GWRFGQTFAS (81 aa)).

The protein belongs to the expansin family. Expansin A subfamily. In terms of tissue distribution, expressed in roots and flowers.

The protein localises to the secreted. It is found in the cell wall. Its subcellular location is the membrane. May cause loosening and extension of plant cell walls by disrupting non-covalent bonding between cellulose microfibrils and matrix glucans. No enzymatic activity has been found. May be required for rapid internodal elongation in deepwater rice during submergence. The polypeptide is Expansin-A13 (EXPA13) (Oryza sativa subsp. japonica (Rice)).